The following is a 390-amino-acid chain: Formate-dependent phosphoribosylglycinamide formyltransferase (390 aa).

Residues glutamate 19–leucine 20 and glutamate 79 each bind N(1)-(5-phospho-beta-D-ribosyl)glycinamide. ATP is bound by residues arginine 111, lysine 152, serine 157–glutamine 162, glutamate 192–valine 195, and glutamate 200. Positions arginine 116–leucine 305 constitute an ATP-grasp domain. Mg(2+) is bound by residues glutamate 264 and glutamate 276. Residues aspartate 283, lysine 353, and arginine 360 to arginine 361 each bind N(1)-(5-phospho-beta-D-ribosyl)glycinamide.

This sequence belongs to the PurK/PurT family. Homodimer.

The enzyme catalyses N(1)-(5-phospho-beta-D-ribosyl)glycinamide + formate + ATP = N(2)-formyl-N(1)-(5-phospho-beta-D-ribosyl)glycinamide + ADP + phosphate + H(+). It participates in purine metabolism; IMP biosynthesis via de novo pathway; N(2)-formyl-N(1)-(5-phospho-D-ribosyl)glycinamide from N(1)-(5-phospho-D-ribosyl)glycinamide (formate route): step 1/1. Functionally, involved in the de novo purine biosynthesis. Catalyzes the transfer of formate to 5-phospho-ribosyl-glycinamide (GAR), producing 5-phospho-ribosyl-N-formylglycinamide (FGAR). Formate is provided by PurU via hydrolysis of 10-formyl-tetrahydrofolate. In Marinobacter nauticus (strain ATCC 700491 / DSM 11845 / VT8) (Marinobacter aquaeolei), this protein is Formate-dependent phosphoribosylglycinamide formyltransferase.